A 287-amino-acid chain; its full sequence is Glutamate racemase (287 aa).

Over residues 1-15 (MATKPQDANTTSREA) the composition is skewed to polar residues. Residues 1 to 25 (MATKPQDANTTSREAITSKADSPPR) are disordered. Substrate is bound by residues 32 to 33 (DS) and 64 to 65 (YG). The active-site Proton donor/acceptor is Cys96. Position 97 to 98 (97 to 98 (NT)) interacts with substrate. The active-site Proton donor/acceptor is Cys208. A substrate-binding site is contributed by 209–210 (TH).

The protein belongs to the aspartate/glutamate racemases family.

The catalysed reaction is L-glutamate = D-glutamate. Its pathway is cell wall biogenesis; peptidoglycan biosynthesis. Its function is as follows. Provides the (R)-glutamate required for cell wall biosynthesis. This chain is Glutamate racemase, found in Yersinia pseudotuberculosis serotype O:3 (strain YPIII).